A 263-amino-acid polypeptide reads, in one-letter code: MTTRYKMTMAYDGHLFHGFQLQPDQRTVQGTVEDALKKMTKGKRIIVQGSGRTDAGVHAIGQVIHFDYPGKTIPANRMILALNSMMPTDIIFNNCEIVNENFHARYSIKGKWYRYRVSLDHFVNPFKRFYTGHFSYALDVGKMQEAAKDLLGKHDFTSFAASGGQIEDKVRTIYYVNIAKDEKENEIVFDFIGSGFLYNMVRIMVAALLEIGNGRRPVHDLKRVIAAKDRQEVRQTAQASGLYLYHVFYDEYHKNIDRTGIYN.

Asp54 functions as the Nucleophile in the catalytic mechanism. Tyr113 lines the substrate pocket.

Belongs to the tRNA pseudouridine synthase TruA family. As to quaternary structure, homodimer.

It carries out the reaction uridine(38/39/40) in tRNA = pseudouridine(38/39/40) in tRNA. Its function is as follows. Formation of pseudouridine at positions 38, 39 and 40 in the anticodon stem and loop of transfer RNAs. This Lactobacillus helveticus (strain DPC 4571) protein is tRNA pseudouridine synthase A.